A 263-amino-acid polypeptide reads, in one-letter code: N-acetylgalactosamine permease IID component (263 aa).

The PTS EIID domain occupies 3 to 263; sequence SEISKKDITR…SIVCSAFGIL (261 aa). The next 6 membrane-spanning stretches (helical) occupy residues 61–81, 98–118, 131–151, 178–198, 215–235, and 243–263; these read LEFI…LISM, LFGP…LPIM, LLGP…RVGW, TILG…INVV, FFDK…MYYF, and PVLL…FGIL.

Its subcellular location is the cell inner membrane. The phosphoenolpyruvate-dependent sugar phosphotransferase system (PTS), a major carbohydrate active -transport system, catalyzes the phosphorylation of incoming sugar substrates concomitant with their translocation across the cell membrane. This system is involved in N-acetylgalactosamine transport. The sequence is that of N-acetylgalactosamine permease IID component (agaD) from Escherichia coli (strain K12).